A 573-amino-acid chain; its full sequence is 2-succinyl-5-enolpyruvyl-6-hydroxy-3-cyclohexene-1-carboxylate synthase (573 aa).

Belongs to the TPP enzyme family. MenD subfamily. Homodimer. Mg(2+) is required as a cofactor. Requires Mn(2+) as cofactor. It depends on thiamine diphosphate as a cofactor.

The enzyme catalyses isochorismate + 2-oxoglutarate + H(+) = 5-enolpyruvoyl-6-hydroxy-2-succinyl-cyclohex-3-ene-1-carboxylate + CO2. It participates in quinol/quinone metabolism; 1,4-dihydroxy-2-naphthoate biosynthesis; 1,4-dihydroxy-2-naphthoate from chorismate: step 2/7. Its pathway is quinol/quinone metabolism; menaquinone biosynthesis. Its function is as follows. Catalyzes the thiamine diphosphate-dependent decarboxylation of 2-oxoglutarate and the subsequent addition of the resulting succinic semialdehyde-thiamine pyrophosphate anion to isochorismate to yield 2-succinyl-5-enolpyruvyl-6-hydroxy-3-cyclohexene-1-carboxylate (SEPHCHC). The protein is 2-succinyl-5-enolpyruvyl-6-hydroxy-3-cyclohexene-1-carboxylate synthase of Shewanella baltica (strain OS195).